Consider the following 278-residue polypeptide: Putative non-heme haloperoxidase (278 aa).

Residues 24–240 form the AB hydrolase-1 domain; sequence PLVFLHGLSV…STAKITNASF (217 aa). Catalysis depends on residues serine 97 and aspartate 221.

It belongs to the AB hydrolase superfamily.

The chain is Putative non-heme haloperoxidase (59.2) from Mycobacterium (Mycobacteriophage D29).